The primary structure comprises 410 residues: Glycylpeptide N-tetradecanoyltransferase (410 aa).

10 residues coordinate tetradecanoyl-CoA: F30, W31, F162, L163, C164, V165, S171, R173, L174, and A175.

This sequence belongs to the NMT family. As to quaternary structure, heterodimer composed of NMT and AK2; AK2 myristoylation stabilizes the complex.

The protein localises to the cytoplasm. The catalysed reaction is N-terminal glycyl-[protein] + tetradecanoyl-CoA = N-tetradecanoylglycyl-[protein] + CoA + H(+). In terms of biological role, adds a myristoyl group to the N-terminal glycine residue of certain cellular proteins. Myristoylates adenylate kinase AK2. During the asexual blood stage, may myristoylate proteins such as ARO, CDPK1 and GAP45. Probably by mediating protein myristoylation, plays a role in the assembly of the inner membrane complex during the early stages of schizogony and in the formation of rhoptries in the late stages and thus merozoite egress. This is Glycylpeptide N-tetradecanoyltransferase from Plasmodium falciparum (isolate 3D7).